The sequence spans 699 residues: SHC SH2 domain-binding protein 1 homolog A (699 aa).

3 PbH1 repeats span residues 480 to 502 (SAEL…EIYP), 503 to 524 (GSKC…LIKD), and 532 to 554 (IPKI…VLVK). The stretch at 603 to 627 (AVEHTNNLEKDQGNLAIAKEEVECE) forms a coiled coil.

It localises to the midbody. The protein localises to the cytoplasm. The protein resides in the cytoskeleton. Its subcellular location is the spindle. Its function is as follows. May play a role in signaling pathways governing cellular proliferation. In Xenopus laevis (African clawed frog), this protein is SHC SH2 domain-binding protein 1 homolog A (shcbp1-a).